The sequence spans 462 residues: Asparagine--tRNA ligase (462 aa).

Belongs to the class-II aminoacyl-tRNA synthetase family. As to quaternary structure, homodimer.

The protein resides in the cytoplasm. The enzyme catalyses tRNA(Asn) + L-asparagine + ATP = L-asparaginyl-tRNA(Asn) + AMP + diphosphate + H(+). The sequence is that of Asparagine--tRNA ligase from Synechocystis sp. (strain ATCC 27184 / PCC 6803 / Kazusa).